A 570-amino-acid polypeptide reads, in one-letter code: MVDNTSIATKSALQAAFSSASSLPLLVSSPGAHGQSGGGGGMKLEAVMENLQRQQAARLALEEKLRQAEKEKDIRSMVESQIQQQALAFRHYQAAVRGAFAAGVPNSSSGHPLERRAESDIDDEDDEDDDPELDRGMDDEERDMDEDDSMNEGGGDEDLEGPLAHYPPRHAVYPGAGQSPKSTPIHLSRVQPPYPAPRQAESPSALAPQAQSQHHEWTYEEQFKQLYELDDDEKRKEFLDDLFSFMQKRGTPVNRIPIMAKQVLDLYTLYKLVTEKGGLVEVINKKIWREITKGLNLPTSITSAAFTLRTQYMKYLYPYECEKRGLSSPGELQAAIDSNRREGRRQSYGSTLFNYSPVGTPTLLASPKLQMPHISMPTPNGGHMTQTPGIKKEDSMLSSCLTNRVGIPMSLAGHHSAAQAAAAAAVQAAALEQLREKLESGEPPEKKVMLMAEEQQRIMQHALQQNLFAMATQLPMNIKLNNRDDRQETALNLSTNGISSINMSIEINGVVYTGVLFARKPAIGFMPSSQRVHHQHSSQGKSNSPGLSSHIQPSSSASSSASSHGPATSP.

Residues 102–215 are disordered; the sequence is AGVPNSSSGH…LAPQAQSQHH (114 aa). Acidic residues predominate over residues 120 to 160; sequence DIDDEDDEDDDPELDRGMDDEERDMDEDDSMNEGGGDEDLE. The residue at position 179 (serine 179) is a Phosphoserine. The region spanning 232–324 is the ARID domain; it reads DEKRKEFLDD…YLYPYECEKR (93 aa). Serine 356 is modified (phosphoserine). The REKLES domain occupies 429–523; it reads AALEQLREKL…GVLFARKPAI (95 aa). The tract at residues 430-473 is important for nuclear localization; it reads ALEQLREKLESGEPPEKKVMLMAEEQQRIMQHALQQNLFAMATQ. Residues 475 to 495 are homodimerization; the sequence is PMNIKLNNRDDRQETALNLST. The interval 519-531 is important for cytoplasmic localization; sequence RKPAIGFMPSSQR. Residues 528 to 570 are disordered; the sequence is SSQRVHHQHSSQGKSNSPGLSSHIQPSSSASSSASSHGPATSP. Phosphoserine occurs at positions 542 and 569. Over residues 548–570 the composition is skewed to low complexity; that stretch reads SSHIQPSSSASSSASSHGPATSP.

Homodimer.

The protein localises to the nucleus. Its subcellular location is the cytoplasm. Functionally, transcription factor. The polypeptide is AT-rich interactive domain-containing protein 3A (arid3a) (Danio rerio (Zebrafish)).